The following is an 863-amino-acid chain: Nitrate reductase [NADH] (863 aa).

Mo-molybdopterin is bound at residue cysteine 137. One can recognise a Cytochrome b5 heme-binding domain in the interval lysine 484–alanine 559. Positions 519 and 542 each coordinate heme. The FAD-binding FR-type domain occupies lysine 602 to aspartate 719. Residues arginine 659 to threonine 662, valine 676 to tyrosine 680, phenylalanine 688, lysine 693 to serine 695, and threonine 746 contribute to the FAD site.

This sequence belongs to the nitrate reductase family. As to quaternary structure, homodimer. FAD serves as cofactor. Mo-molybdopterin is required as a cofactor. Requires heme as cofactor.

It catalyses the reaction nitrite + NAD(+) + H2O = nitrate + NADH + H(+). Functionally, nitrate reductase is a key enzyme involved in the first step of nitrate assimilation in plants, fungi and bacteria. In Ulva prolifera (Green seaweed), this protein is Nitrate reductase [NADH].